We begin with the raw amino-acid sequence, 431 residues long: RbAp48-related WD40 repeat-containing protein prw1 (431 aa).

6 WD repeats span residues 127 to 159 (SHPESVCSAKLMPQDDSCVATVGNYHNDVLVFD), 182 to 213 (KHTQPCTSVCWNFLSKGTLVSGSQDATLSCWD), 232 to 263 (SHEKQVSDVRFHYKHQDLLASVSYDQYLHVHD), 279 to 310 (AHSGPIHSVAFNPHNDFILATCSTDKTIALWD), 323 to 354 (GHEDIVTKISFSPHEEPILASTSADRRTLVWD), and 380 to 411 (GHTSCTIDMDWCPNYNWTMATAAEDNILQIWT).

This sequence belongs to the WD repeat HIR1 family. Heterotetramer of alp13, clr6, prw1 and pst2.

Its subcellular location is the nucleus. In terms of biological role, has a role in chromatin assembly and chromosome segregation. Involved in the deacetylation of histones. This Schizosaccharomyces pombe (strain 972 / ATCC 24843) (Fission yeast) protein is RbAp48-related WD40 repeat-containing protein prw1 (prw1).